A 1264-amino-acid chain; its full sequence is Phosphatidylinositol 3,4,5-trisphosphate 5-phosphatase 2 (1264 aa).

The SH2 domain occupies 26 to 122 (WYHRDLSRAA…GLVCALLLPV (97 aa)). A compositionally biased stretch (basic and acidic residues) spans 124 to 137 (REREPDPPDDRDVS). The tract at residues 124-182 (REREPDPPDDRDVSDGEDEKPPLPPRSGSTSISAPVGPGSPPAAPETPTTPAAESAPNG) is disordered. Position 137 is a phosphoserine (S137). The span at 169 to 180 (ETPTTPAAESAP) shows a compositional bias: low complexity. T170 is modified (phosphothreonine). 2 positions are modified to phosphoserine: S246 and S358. Y892 carries the phosphotyrosine modification. The residue at position 896 (S896) is a Phosphoserine. Positions 903–1123 (GAKSKAPSVS…TFLGEVASGD (221 aa)) are disordered. A compositionally biased stretch (pro residues) spans 944–954 (PPPTGRPPAPP). An SH3-binding motif is present at residues 950 to 955 (PPAPPR). The segment covering 957-971 (ASREEPLTPRLKAEG) has biased composition (basic and acidic residues). Phosphothreonine is present on T964. The short motif at 989-992 (NPAY) is the NPXY motif element. Y992 is modified (phosphotyrosine). Pro residues-rich tracts occupy residues 1002-1017 (LLPP…PVPP), 1054-1065 (LPPPDFPPPPLP), and 1093-1110 (GPPP…PGPS). S1137 is modified (phosphoserine). The tract at residues 1140–1178 (DYAPAGPGRSVLLPGPLELQPPRGLPSDYGRPLSFPPPR) is disordered. Y1141 and Y1168 each carry phosphotyrosine. In terms of domain architecture, SAM spans 1210 to 1264 (WLRAIGLERYEEGLVHNGWDDLEFLSDITEEDLEEAGVQDPAHKRLLLDTLQLSK). The residue at position 1263 (S1263) is a Phosphoserine.

Belongs to the inositol 1,4,5-trisphosphate 5-phosphatase family. As to quaternary structure, interacts with tyrosine phosphorylated form of SHC1. Interacts with EGFR. Upon stimulation by the EGF signaling pathway, it forms a complex with SHC1 and EGFR. Interacts with cytoskeletal protein SORBS3/vinexin, promoting its localization to the periphery of cells. Forms a complex with filamin (FLNA or FLNB), actin, GPIb (GP1BA or GP1BB) that regulates cortical and submembraneous actin. Interacts with c-Met/MET, when c-Met/MET is phosphorylated on 'Tyr-1356'. Interacts with p130Cas/BCAR1. Interacts with CENTD3/ARAP3 via its SAM domain. Interacts with c-Cbl/CBL and CAP/SORBS1. Interacts with activated EPHA2 receptor. Interacts with receptor FCGR2A. Interacts with receptor FCGR2B. Interacts with tyrosine kinase ABL1. Interacts with tyrosine kinase TEC. Interacts with CSF1R. Interacts (via N-terminus) with SH3YL1 (via SH3 domain). Interacts with FCRL6 (tyrosine phosphorylated form). Interacts (via SH2 domain) with tyrosine phosphorylated KLRC1 (via ITIM). Interacts with NEDD9/HEF1. Post-translationally, tyrosine phosphorylated by the members of the SRC family after exposure to a diverse array of extracellular stimuli such as insulin, growth factors such as EGF or PDGF, chemokines, integrin ligands and hypertonic and oxidative stress. May be phosphorylated upon IgG receptor FCGR2B-binding. Phosphorylated at Tyr-992 following cell attachment and spreading. Phosphorylated at Tyr-1168 following EGF signaling pathway stimulation. Phosphorylated at Thr-964 in response to PDGF.

The protein localises to the cytoplasm. The protein resides in the cytosol. It is found in the membrane. Its subcellular location is the cell projection. It localises to the filopodium. The protein localises to the lamellipodium. The protein resides in the basal cell membrane. It is found in the nucleus. Its subcellular location is the nucleus speckle. It localises to the cytoskeleton. The protein localises to the spindle pole. It carries out the reaction a 1,2-diacyl-sn-glycero-3-phospho-(1D-myo-inositol-3,4,5-trisphosphate) + H2O = a 1,2-diacyl-sn-glycero-3-phospho-(1D-myo-inositol-3,4-bisphosphate) + phosphate. It catalyses the reaction 1,2-dioctanoyl-sn-glycero-3-phospho-(1D-myo-inositol-3,4,5-trisphosphate) + H2O = 1,2-dioctanoyl-sn-glycero-3-phospho-(1D-myo-inositol-3,4-bisphosphate) + phosphate. The catalysed reaction is 1,2-dihexadecanoyl-sn-glycero-3-phospho-(1D-myo-inositol-3,4,5-trisphosphate) + H2O = 1,2-dihexadecanoyl-sn-glycero-3-phospho-(1D-myo-inositol-3,4-bisphosphate) + phosphate. With respect to regulation, activated upon translocation to the sites of synthesis of PtdIns(3,4,5)P3 in the membrane. Enzymatic activity is enhanced in the presence of phosphatidylserine. In terms of biological role, phosphatidylinositol (PtdIns) phosphatase that specifically hydrolyzes the 5-phosphate of phosphatidylinositol-3,4,5-trisphosphate (PtdIns(3,4,5)P3) to produce PtdIns(3,4)P2, thereby negatively regulating the PI3K (phosphoinositide 3-kinase) pathways. Required for correct mitotic spindle orientation and therefore progression of mitosis. Plays a central role in regulation of PI3K-dependent insulin signaling, although the precise molecular mechanisms and signaling pathways remain unclear. While overexpression reduces both insulin-stimulated MAP kinase and Akt activation, its absence does not affect insulin signaling or GLUT4 trafficking. Confers resistance to dietary obesity. May act by regulating AKT2, but not AKT1, phosphorylation at the plasma membrane. Part of a signaling pathway that regulates actin cytoskeleton remodeling. Required for the maintenance and dynamic remodeling of actin structures as well as in endocytosis, having a major impact on ligand-induced EGFR internalization and degradation. Participates in regulation of cortical and submembraneous actin by hydrolyzing PtdIns(3,4,5)P3 thereby regulating membrane ruffling. Regulates cell adhesion and cell spreading. Required for HGF-mediated lamellipodium formation, cell scattering and spreading. Acts as a negative regulator of EPHA2 receptor endocytosis by inhibiting via PI3K-dependent Rac1 activation. Acts as a regulator of neuritogenesis by regulating PtdIns(3,4,5)P3 level and is required to form an initial protrusive pattern, and later, maintain proper neurite outgrowth. Acts as a negative regulator of the FC-gamma-RIIA receptor (FCGR2A). Mediates signaling from the FC-gamma-RIIB receptor (FCGR2B), playing a central role in terminating signal transduction from activating immune/hematopoietic cell receptor systems. Involved in EGF signaling pathway. Upon stimulation by EGF, it is recruited by EGFR and dephosphorylates PtdIns(3,4,5)P3. Plays a negative role in regulating the PI3K-PKB pathway, possibly by inhibiting PKB activity. Down-regulates Fc-gamma-R-mediated phagocytosis in macrophages independently of INPP5D/SHIP1. In macrophages, down-regulates NF-kappa-B-dependent gene transcription by regulating macrophage colony-stimulating factor (M-CSF)-induced signaling. Plays a role in the localization of AURKA and NEDD9/HEF1 to the basolateral membrane at interphase in polarized cysts, thereby mediates cell cycle homeostasis, cell polarization and cilia assembly. Additionally promotion of cilia growth is also facilitated by hydrolysis of (PtdIns(3,4,5)P3) to PtdIns(3,4)P2. Promotes formation of apical membrane-initiation sites during the initial stages of lumen formation via Rho family-induced actin filament organization and CTNNB1 localization to cell-cell contacts. May also hydrolyze PtdIns(1,3,4,5)P4, and could thus affect the levels of the higher inositol polyphosphates like InsP6. Involved in endochondral ossification. The protein is Phosphatidylinositol 3,4,5-trisphosphate 5-phosphatase 2 of Canis lupus familiaris (Dog).